We begin with the raw amino-acid sequence, 249 residues long: MYLNIAYPRNGTVKQFEISDEVLRRVQLQDYRLGNEVDGAIFGSEFKGYIFRLRGGSDKDGFPMVPGVLASSRVSLLVKRGAIGFNTFRGYQGERRRKNVRGCVLASDIALVNVTISKVGDQPIEGVTDTTAPRRLGPKRASKIRKLFNLSRTEDVRKYVVRRRVVKSGKKDRLKAPKIQRLITPRVKARRAKKAKDAIAKVRASAAERREYLRLIASNRRALRQRDHSKKHTQKVHAQRAEVAAFQKK.

Residues 223–238 (LRQRDHSKKHTQKVHA) show a composition bias toward basic residues. A disordered region spans residues 223 to 249 (LRQRDHSKKHTQKVHAQRAEVAAFQKK).

The protein belongs to the eukaryotic ribosomal protein eS6 family. Component of the small ribosomal subunit. Part of the small subunit (SSU) processome, composed of more than 70 proteins and the RNA chaperone small nucleolar RNA (snoRNA) U3. Post-translationally, ribosomal protein S6 is the major substrate of protein kinases in eukaryote ribosomes.

The protein localises to the cytoplasm. It is found in the nucleus. The protein resides in the nucleolus. Its function is as follows. Component of the 40S small ribosomal subunit. Plays an important role in controlling cell growth and proliferation through the selective translation of particular classes of mRNA. Part of the small subunit (SSU) processome, first precursor of the small eukaryotic ribosomal subunit. During the assembly of the SSU processome in the nucleolus, many ribosome biogenesis factors, an RNA chaperone and ribosomal proteins associate with the nascent pre-rRNA and work in concert to generate RNA folding, modifications, rearrangements and cleavage as well as targeted degradation of pre-ribosomal RNA by the RNA exosome. This Leishmania infantum protein is Small ribosomal subunit protein eS6 (RPS6).